The primary structure comprises 142 residues: Type II secretion system core protein G (142 aa).

Positions 1-8 (MQRRQQSG) are cleaved as a propeptide — leader sequence. Phenylalanine 9 carries the post-translational modification N-methylphenylalanine. Residues 9–29 (FTLIEIMVVVVILGILAALVV) form a helical membrane-spanning segment. The disordered stretch occupies residues 121–142 (SLGADGKEGGSDNDADIGNWDN).

It belongs to the GSP G family. As to quaternary structure, type II secretion system is composed of four main components: the outer membrane complex, the inner membrane complex, the cytoplasmic secretion ATPase and the periplasm-spanning pseudopilus. Forms homomultimers. Interacts with pseudopilin tip ternary complex made of XcpX, XcpU, XcpV and XcpW. Interacts with PilA. In terms of processing, cleaved by the prepilin peptidase. Methylated by prepilin peptidase at the amino group of the N-terminal phenylalanine once the leader sequence is cleaved.

It is found in the cell inner membrane. In terms of biological role, core component of the type II secretion system required for the energy-dependent secretion of extracellular factors such as proteases and toxins from the periplasm. Pseudopilin (pilin-like) protein that polymerizes to form the pseudopilus. Further polymerization triggers pseudopilus growth. Type II pseudopilus confers increased bacterial adhesive capabilities. The protein is Type II secretion system core protein G (xcpT) of Pseudomonas aeruginosa (strain ATCC 15692 / DSM 22644 / CIP 104116 / JCM 14847 / LMG 12228 / 1C / PRS 101 / PAO1).